The chain runs to 370 residues: tRNA-specific 2-thiouridylase MnmA (370 aa).

ATP contacts are provided by residues 7-14 (GISGGVDS) and Met33. The interaction with target base in tRNA stretch occupies residues 104-106 (NPD). Catalysis depends on Cys109, which acts as the Nucleophile. Cys109 and Cys208 are joined by a disulfide. Gly134 is an ATP binding site. Positions 158–160 (KDQ) are interaction with tRNA. The active-site Cysteine persulfide intermediate is the Cys208.

This sequence belongs to the MnmA/TRMU family.

The protein resides in the cytoplasm. The catalysed reaction is S-sulfanyl-L-cysteinyl-[protein] + uridine(34) in tRNA + AH2 + ATP = 2-thiouridine(34) in tRNA + L-cysteinyl-[protein] + A + AMP + diphosphate + H(+). Catalyzes the 2-thiolation of uridine at the wobble position (U34) of tRNA, leading to the formation of s(2)U34. The sequence is that of tRNA-specific 2-thiouridylase MnmA from Malacoplasma penetrans (strain HF-2) (Mycoplasma penetrans).